A 119-amino-acid polypeptide reads, in one-letter code: E3 ubiquitin-protein ligase PPP1R11 (119 aa).

The segment at 1–42 (MAESSGPTAGGGATSSTVTTESDTQPEHRSLTLKLRKRKPDK) is disordered. Atypical RING finger domain regions lie at residues 55–65 (NLGRRSSKCCC) and 87–96 (CESAHCIRGH). The disordered stretch occupies residues 96–119 (HKKATSGSKETPSSHHDKTGSMQH). A compositionally biased stretch (basic and acidic residues) spans 107-119 (PSSHHDKTGSMQH).

It catalyses the reaction S-ubiquitinyl-[E2 ubiquitin-conjugating enzyme]-L-cysteine + [acceptor protein]-L-lysine = [E2 ubiquitin-conjugating enzyme]-L-cysteine + N(6)-ubiquitinyl-[acceptor protein]-L-lysine.. It participates in protein modification; protein ubiquitination. Its function is as follows. Atypical E3 ubiquitin-protein ligase which ubiquitinates TLR2 at 'Lys-754' leading to its degradation by the proteasome. Inhibitor of protein phosphatase 1. The sequence is that of E3 ubiquitin-protein ligase PPP1R11 (ppp1r11) from Xenopus tropicalis (Western clawed frog).